We begin with the raw amino-acid sequence, 216 residues long: Dimethylamine corrinoid protein 2 (216 aa).

The B12-binding N-terminal domain maps to 1–91 (MASKEELLQE…EMPAGTETKK (91 aa)). In terms of domain architecture, B12-binding spans 92-216 (LGVIVNGTVE…AKAKELLLGK (125 aa)). His105 contributes to the methylcob(III)alamin binding site.

This sequence belongs to the methylamine corrinoid protein family.

The protein operates within one-carbon metabolism; methanogenesis from dimethylamine. Its function is as follows. Acts as a methyl group carrier between MtbB and MtbA. The sequence is that of Dimethylamine corrinoid protein 2 (mtbC2) from Methanosarcina acetivorans (strain ATCC 35395 / DSM 2834 / JCM 12185 / C2A).